Here is a 198-residue protein sequence, read N- to C-terminus: T-cell surface glycoprotein CD3 epsilon chain (198 aa).

Positions M1–G21 are cleaved as a signal peptide. Residues Q22–T120 are Extracellular-facing. In terms of domain architecture, Ig-like spans A28–K106. A disulfide bridge links C49 with C90. The chain crosses the membrane as a helical span at residues V121–Y141. The Cytoplasmic portion of the chain corresponds to W142–I198. The disordered stretch occupies residues V153–I198. The tract at residues Q166–R183 is NUMB-binding region. Residues E169–R196 enclose the ITAM domain. The tract at residues R170 to P177 is proline-rich sequence. Residues Y179 and Y190 each carry the phosphotyrosine modification.

In terms of assembly, the TCR-CD3 complex is composed of a CD3D/CD3E and a CD3G/CD3E heterodimers that preferentially associate with TCRalpha and TCRbeta, respectively, to form TCRalpha/CD3E/CD3G and TCRbeta/CD3G/CD3E trimers. In turn, the hexamer interacts with CD3Z homodimer to form the TCR-CD3 complex. Alternatively, TCRalpha and TCRbeta can be replaced by TCRgamma and TCRdelta. Interacts with CD6. Interacts (via Proline-rich sequence) with NCK1; the interaction is ligand dependent but independent of tyrosine kinase activation. Post-translationally, phosphorylated on Tyr residues after T-cell receptor triggering by LCK in association with CD4/CD8.

The protein localises to the cell membrane. Part of the TCR-CD3 complex present on T-lymphocyte cell surface that plays an essential role in adaptive immune response. When antigen presenting cells (APCs) activate T-cell receptor (TCR), TCR-mediated signals are transmitted across the cell membrane by the CD3 chains CD3D, CD3E, CD3G and CD3Z. All CD3 chains contain immunoreceptor tyrosine-based activation motifs (ITAMs) in their cytoplasmic domain. Upon TCR engagement, these motifs become phosphorylated by Src family protein tyrosine kinases LCK and FYN, resulting in the activation of downstream signaling pathways. In addition of this role of signal transduction in T-cell activation, CD3E plays an essential role in correct T-cell development. Also participates in internalization and cell surface down-regulation of TCR-CD3 complexes via endocytosis sequences present in CD3E cytosolic region. In addition to its role as a TCR coreceptor, it serves as a receptor for ITPRIPL1. Ligand recognition inhibits T-cell activation by promoting interaction with NCK1, which prevents CD3E-ZAP70 interaction and blocks the ERK-NFkB signaling cascade and calcium influx. The sequence is that of T-cell surface glycoprotein CD3 epsilon chain (CD3E) from Oryctolagus cuniculus (Rabbit).